Here is a 236-residue protein sequence, read N- to C-terminus: Ubiquinone biosynthesis O-methyltransferase (236 aa).

Positions 39, 59, 80, and 124 each coordinate S-adenosyl-L-methionine.

This sequence belongs to the methyltransferase superfamily. UbiG/COQ3 family.

It carries out the reaction a 3-demethylubiquinol + S-adenosyl-L-methionine = a ubiquinol + S-adenosyl-L-homocysteine + H(+). The enzyme catalyses a 3-(all-trans-polyprenyl)benzene-1,2-diol + S-adenosyl-L-methionine = a 2-methoxy-6-(all-trans-polyprenyl)phenol + S-adenosyl-L-homocysteine + H(+). It functions in the pathway cofactor biosynthesis; ubiquinone biosynthesis. O-methyltransferase that catalyzes the 2 O-methylation steps in the ubiquinone biosynthetic pathway. The protein is Ubiquinone biosynthesis O-methyltransferase of Shewanella sp. (strain MR-4).